The chain runs to 124 residues: Small ribosomal subunit protein uS13 (124 aa).

Positions 95-124 (GLPVRGQRTKTNARTRKGPKRTIAGKKKAK) are disordered.

Belongs to the universal ribosomal protein uS13 family. Part of the 30S ribosomal subunit. Forms a loose heterodimer with protein S19. Forms two bridges to the 50S subunit in the 70S ribosome.

Its function is as follows. Located at the top of the head of the 30S subunit, it contacts several helices of the 16S rRNA. In the 70S ribosome it contacts the 23S rRNA (bridge B1a) and protein L5 of the 50S subunit (bridge B1b), connecting the 2 subunits; these bridges are implicated in subunit movement. Contacts the tRNAs in the A and P-sites. This is Small ribosomal subunit protein uS13 from Rhodococcus jostii (strain RHA1).